A 187-amino-acid chain; its full sequence is UPF0301 protein PMI0339 (187 aa).

The protein belongs to the UPF0301 (AlgH) family.

This chain is UPF0301 protein PMI0339, found in Proteus mirabilis (strain HI4320).